We begin with the raw amino-acid sequence, 119 residues long: Large ribosomal subunit protein bL20 (119 aa).

The protein belongs to the bacterial ribosomal protein bL20 family.

In terms of biological role, binds directly to 23S ribosomal RNA and is necessary for the in vitro assembly process of the 50S ribosomal subunit. It is not involved in the protein synthesizing functions of that subunit. The protein is Large ribosomal subunit protein bL20 of Jannaschia sp. (strain CCS1).